The sequence spans 207 residues: Outer-membrane lipoprotein LolB (207 aa).

The N-terminal stretch at Met-1–Ser-26 is a signal peptide. The N-palmitoyl cysteine moiety is linked to residue Cys-27. Cys-27 carries S-diacylglycerol cysteine lipidation.

The protein belongs to the LolB family. As to quaternary structure, monomer.

It localises to the cell outer membrane. In terms of biological role, plays a critical role in the incorporation of lipoproteins in the outer membrane after they are released by the LolA protein. The sequence is that of Outer-membrane lipoprotein LolB from Francisella tularensis subsp. tularensis (strain WY96-3418).